Reading from the N-terminus, the 171-residue chain is Disulfide bond formation protein B (171 aa).

The Cytoplasmic portion of the chain corresponds to 1–8 (MRLSYRLV). Residues 9–25 (SGLLVLASIVGMSFALY) form a helical membrane-spanning segment. The Periplasmic portion of the chain corresponds to 26-43 (LEHVKGLEPCPLCIFQRV). The cysteines at positions 35 and 38 are disulfide-linked. Residues 44–60 (GLMAMGFVALIAFLHNP) form a helical membrane-spanning segment. Over 61–67 (VSNAIKR) the chain is Cytoplasmic. A helical transmembrane segment spans residues 68 to 85 (FYAFLAGVAILWSVGVAG). Topologically, residues 86 to 142 (RHVWLQHLPPDQVPSCGPGLNYLIDALPMKTVLQEVLSGSGECAAIDWTFLGQSLPV) are periplasmic. C101 and C128 are oxidised to a cystine. A helical membrane pass occupies residues 143 to 161 (WSLAYFLLLLLVCLWQLFR). Topologically, residues 162–171 (FYPVFKTAKK) are cytoplasmic.

The protein belongs to the DsbB family.

It localises to the cell inner membrane. Functionally, required for disulfide bond formation in some periplasmic proteins. Acts by oxidizing the DsbA protein. The chain is Disulfide bond formation protein B from Acinetobacter baumannii (strain ATCC 17978 / DSM 105126 / CIP 53.77 / LMG 1025 / NCDC KC755 / 5377).